The chain runs to 356 residues: tRNA-specific 2-thiouridylase MnmA (356 aa).

Residues 6–13 (GMSGGVDS) and Leu32 each bind ATP. The active-site Nucleophile is the Cys102. A disulfide bridge connects residues Cys102 and Cys200. ATP is bound at residue Gly127. Positions 150–152 (RDQ) are interaction with tRNA. The active-site Cysteine persulfide intermediate is the Cys200. Residues 302–303 (RY) are interaction with tRNA.

It belongs to the MnmA/TRMU family.

Its subcellular location is the cytoplasm. It carries out the reaction S-sulfanyl-L-cysteinyl-[protein] + uridine(34) in tRNA + AH2 + ATP = 2-thiouridine(34) in tRNA + L-cysteinyl-[protein] + A + AMP + diphosphate + H(+). Catalyzes the 2-thiolation of uridine at the wobble position (U34) of tRNA, leading to the formation of s(2)U34. The chain is tRNA-specific 2-thiouridylase MnmA from Aquifex aeolicus (strain VF5).